A 142-amino-acid polypeptide reads, in one-letter code: Large ribosomal subunit protein uL11 (142 aa).

Belongs to the universal ribosomal protein uL11 family. In terms of assembly, part of the ribosomal stalk of the 50S ribosomal subunit. Interacts with L10 and the large rRNA to form the base of the stalk. L10 forms an elongated spine to which L12 dimers bind in a sequential fashion forming a multimeric L10(L12)X complex. One or more lysine residues are methylated.

Functionally, forms part of the ribosomal stalk which helps the ribosome interact with GTP-bound translation factors. In Mesorhizobium japonicum (strain LMG 29417 / CECT 9101 / MAFF 303099) (Mesorhizobium loti (strain MAFF 303099)), this protein is Large ribosomal subunit protein uL11.